A 253-amino-acid chain; its full sequence is Triosephosphate isomerase (253 aa).

15–17 (NWK) lines the substrate pocket. The Electrophile role is filled by histidine 101. Glutamate 171 functions as the Proton acceptor in the catalytic mechanism. Substrate contacts are provided by residues glycine 177, serine 216, and 237–238 (GG).

Belongs to the triosephosphate isomerase family. Homodimer.

It is found in the cytoplasm. The enzyme catalyses D-glyceraldehyde 3-phosphate = dihydroxyacetone phosphate. Its pathway is carbohydrate biosynthesis; gluconeogenesis. It participates in carbohydrate degradation; glycolysis; D-glyceraldehyde 3-phosphate from glycerone phosphate: step 1/1. In terms of biological role, involved in the gluconeogenesis. Catalyzes stereospecifically the conversion of dihydroxyacetone phosphate (DHAP) to D-glyceraldehyde-3-phosphate (G3P). The sequence is that of Triosephosphate isomerase from Caulobacter vibrioides (strain ATCC 19089 / CIP 103742 / CB 15) (Caulobacter crescentus).